Here is a 629-residue protein sequence, read N- to C-terminus: tRNA uridine 5-carboxymethylaminomethyl modification enzyme MnmG (629 aa).

An FAD-binding site is contributed by G13–G18. NAD(+) is bound at residue G273 to F287.

Belongs to the MnmG family. Homodimer. Heterotetramer of two MnmE and two MnmG subunits. FAD is required as a cofactor.

It is found in the cytoplasm. NAD-binding protein involved in the addition of a carboxymethylaminomethyl (cmnm) group at the wobble position (U34) of certain tRNAs, forming tRNA-cmnm(5)s(2)U34. This chain is tRNA uridine 5-carboxymethylaminomethyl modification enzyme MnmG, found in Nitrosococcus oceani (strain ATCC 19707 / BCRC 17464 / JCM 30415 / NCIMB 11848 / C-107).